Reading from the N-terminus, the 283-residue chain is Thymidylate synthase (283 aa).

Arg-22 serves as a coordination point for dUMP. The active-site Nucleophile is Cys-160. Residues 180 to 183 (RSCD), Asn-191, and 221 to 223 (HIY) each bind dUMP. Position 183 (Asp-183) interacts with (6R)-5,10-methylene-5,6,7,8-tetrahydrofolate. A (6R)-5,10-methylene-5,6,7,8-tetrahydrofolate-binding site is contributed by Ser-282.

The protein belongs to the thymidylate synthase family. Bacterial-type ThyA subfamily. Homodimer.

Its subcellular location is the cytoplasm. The enzyme catalyses dUMP + (6R)-5,10-methylene-5,6,7,8-tetrahydrofolate = 7,8-dihydrofolate + dTMP. Its pathway is pyrimidine metabolism; dTTP biosynthesis. In terms of biological role, catalyzes the reductive methylation of 2'-deoxyuridine-5'-monophosphate (dUMP) to 2'-deoxythymidine-5'-monophosphate (dTMP) while utilizing 5,10-methylenetetrahydrofolate (mTHF) as the methyl donor and reductant in the reaction, yielding dihydrofolate (DHF) as a by-product. This enzymatic reaction provides an intracellular de novo source of dTMP, an essential precursor for DNA biosynthesis. The chain is Thymidylate synthase from Mannheimia succiniciproducens (strain KCTC 0769BP / MBEL55E).